Consider the following 153-residue polypeptide: uncharacterized protein (153 aa).

3 helical membrane-spanning segments follow: residues 17–37 (ITLI…SMFF), 44–64 (FLLC…IGMG), and 118–138 (FVFI…TLII).

To M.jannaschii MJ0129 and MJ0554.

It is found in the cell membrane. This is an uncharacterized protein from Methanocaldococcus jannaschii (strain ATCC 43067 / DSM 2661 / JAL-1 / JCM 10045 / NBRC 100440) (Methanococcus jannaschii).